Here is a 545-residue protein sequence, read N- to C-terminus: Glucans biosynthesis protein G (545 aa).

The N-terminal stretch at Met-1–Ala-34 is a signal peptide. Positions Lys-38–Asn-60 are disordered.

Belongs to the OpgD/OpgG family.

It is found in the periplasm. It functions in the pathway glycan metabolism; osmoregulated periplasmic glucan (OPG) biosynthesis. Its function is as follows. Involved in the biosynthesis of osmoregulated periplasmic glucans (OPGs). The polypeptide is Glucans biosynthesis protein G (Shewanella sp. (strain ANA-3)).